A 470-amino-acid chain; its full sequence is Ribosomal protein uS12 methylthiotransferase RimO (470 aa).

The tract at residues Met-1–Arg-27 is disordered. Polar residues predominate over residues His-7 to Thr-19. The region spanning Pro-26–Pro-141 is the MTTase N-terminal domain. [4Fe-4S] cluster-binding residues include Cys-35, Cys-71, Cys-100, Cys-172, Cys-176, and Cys-179. The Radical SAM core domain maps to Leu-158 to Arg-399. In terms of domain architecture, TRAM spans Gln-402–Val-470.

The protein belongs to the methylthiotransferase family. RimO subfamily. Requires [4Fe-4S] cluster as cofactor.

The protein localises to the cytoplasm. It catalyses the reaction L-aspartate(89)-[ribosomal protein uS12]-hydrogen + (sulfur carrier)-SH + AH2 + 2 S-adenosyl-L-methionine = 3-methylsulfanyl-L-aspartate(89)-[ribosomal protein uS12]-hydrogen + (sulfur carrier)-H + 5'-deoxyadenosine + L-methionine + A + S-adenosyl-L-homocysteine + 2 H(+). Catalyzes the methylthiolation of an aspartic acid residue of ribosomal protein uS12. In Cupriavidus taiwanensis (strain DSM 17343 / BCRC 17206 / CCUG 44338 / CIP 107171 / LMG 19424 / R1) (Ralstonia taiwanensis (strain LMG 19424)), this protein is Ribosomal protein uS12 methylthiotransferase RimO.